Consider the following 236-residue polypeptide: Uridylate kinase (236 aa).

ATP is bound at residue 12 to 15; that stretch reads KISG. The involved in allosteric activation by GTP stretch occupies residues 20–25; it reads GKKGFG. Gly54 contributes to the UMP binding site. ATP is bound by residues Gly55 and Arg59. Residues Asp72 and 133 to 140 each bind UMP; that span reads TGNPYFST. Tyr166 and Asp169 together coordinate ATP.

This sequence belongs to the UMP kinase family. As to quaternary structure, homohexamer.

The protein resides in the cytoplasm. It catalyses the reaction UMP + ATP = UDP + ADP. It participates in pyrimidine metabolism; CTP biosynthesis via de novo pathway; UDP from UMP (UMPK route): step 1/1. Its activity is regulated as follows. Allosterically activated by GTP. Inhibited by UTP. Catalyzes the reversible phosphorylation of UMP to UDP. This Clostridium novyi (strain NT) protein is Uridylate kinase.